The following is a 413-amino-acid chain: Ribulose bisphosphate carboxylase large chain (413 aa).

Substrate contacts are provided by Asn-100 and Thr-150. Lys-152 (proton acceptor) is an active-site residue. A substrate-binding site is contributed by Lys-154. Mg(2+) is bound by residues Lys-178, Asp-180, and Glu-181. Lys-178 carries the N6-carboxylysine modification. The Proton acceptor role is filled by His-271. Residues Arg-272, His-304, and Ser-356 each contribute to the substrate site.

Belongs to the RuBisCO large chain family. Type I subfamily. In terms of assembly, heterohexadecamer of 8 large chains and 8 small chains; disulfide-linked. The disulfide link is formed within the large subunit homodimers. The cofactor is Mg(2+). Post-translationally, the disulfide bond which can form in the large chain dimeric partners within the hexadecamer appears to be associated with oxidative stress and protein turnover.

The protein localises to the plastid. The protein resides in the chloroplast. It catalyses the reaction 2 (2R)-3-phosphoglycerate + 2 H(+) = D-ribulose 1,5-bisphosphate + CO2 + H2O. The catalysed reaction is D-ribulose 1,5-bisphosphate + O2 = 2-phosphoglycolate + (2R)-3-phosphoglycerate + 2 H(+). RuBisCO catalyzes two reactions: the carboxylation of D-ribulose 1,5-bisphosphate, the primary event in carbon dioxide fixation, as well as the oxidative fragmentation of the pentose substrate in the photorespiration process. Both reactions occur simultaneously and in competition at the same active site. The protein is Ribulose bisphosphate carboxylase large chain (rbcL) of Adiantum pedatum (Northern maidenhair fern).